The primary structure comprises 192 residues: uncharacterized protein (192 aa).

An N-terminal signal peptide occupies residues 1 to 17; the sequence is MFKKILFPLVALFMLAG. Cys-18 carries the N-palmitoyl cysteine lipid modification. The S-diacylglycerol cysteine moiety is linked to residue Cys-18.

The protein to H.influenzae HI_0162.

Its subcellular location is the cell membrane. This is an uncharacterized protein from Escherichia coli O6:H1 (strain CFT073 / ATCC 700928 / UPEC).